Reading from the N-terminus, the 215-residue chain is Thiamine-phosphate synthase (215 aa).

4-amino-2-methyl-5-(diphosphooxymethyl)pyrimidine is bound by residues 37-41 (QLRIK) and Asn69. Asp70 and Asp89 together coordinate Mg(2+). Ser108 lines the 4-amino-2-methyl-5-(diphosphooxymethyl)pyrimidine pocket. Position 134–136 (134–136 (TQT)) interacts with 2-[(2R,5Z)-2-carboxy-4-methylthiazol-5(2H)-ylidene]ethyl phosphate. Residue Lys137 coordinates 4-amino-2-methyl-5-(diphosphooxymethyl)pyrimidine. 2-[(2R,5Z)-2-carboxy-4-methylthiazol-5(2H)-ylidene]ethyl phosphate contacts are provided by residues Gly166 and 186–187 (VS).

This sequence belongs to the thiamine-phosphate synthase family. It depends on Mg(2+) as a cofactor.

The enzyme catalyses 2-[(2R,5Z)-2-carboxy-4-methylthiazol-5(2H)-ylidene]ethyl phosphate + 4-amino-2-methyl-5-(diphosphooxymethyl)pyrimidine + 2 H(+) = thiamine phosphate + CO2 + diphosphate. It carries out the reaction 2-(2-carboxy-4-methylthiazol-5-yl)ethyl phosphate + 4-amino-2-methyl-5-(diphosphooxymethyl)pyrimidine + 2 H(+) = thiamine phosphate + CO2 + diphosphate. The catalysed reaction is 4-methyl-5-(2-phosphooxyethyl)-thiazole + 4-amino-2-methyl-5-(diphosphooxymethyl)pyrimidine + H(+) = thiamine phosphate + diphosphate. Its pathway is cofactor biosynthesis; thiamine diphosphate biosynthesis; thiamine phosphate from 4-amino-2-methyl-5-diphosphomethylpyrimidine and 4-methyl-5-(2-phosphoethyl)-thiazole: step 1/1. Functionally, condenses 4-methyl-5-(beta-hydroxyethyl)thiazole monophosphate (THZ-P) and 2-methyl-4-amino-5-hydroxymethyl pyrimidine pyrophosphate (HMP-PP) to form thiamine monophosphate (TMP). This chain is Thiamine-phosphate synthase, found in Yersinia pestis (strain Pestoides F).